Here is a 570-residue protein sequence, read N- to C-terminus: Developmental and secondary metabolism regulator veA (570 aa).

4 disordered regions span residues 1–24, 39–60, 266–491, and 504–541; these read MATRPPLMPPANETESSVSRISRE, ERARACGAGAKSSADRRPVDPP, DMYA…LGSG, and KRSHEETFGSDERPLHNGMRPDMDQYPSMGRKQPDYGR. In terms of domain architecture, Velvet spans 25-231; it reads GKKITYKLSV…AEQGCRVRIR (207 aa). Positions 39–44 match the Nuclear localization signal motif; that stretch reads ERARAC. Residues 278 to 287 show a composition bias toward polar residues; that stretch reads STSISTTADT. Positions 315 to 335 are enriched in low complexity; it reads SMPAASAAPAPAPVHSPATSA. 3 stretches are compositionally biased toward polar residues: residues 336–354, 363–395, and 427–445; these read QTSSYQSHLSFGATQSQYP, QSATPTNTYSPHPSYSHSRNPSNGTEYDATSSG, and NMQTSTDSRSSDANAYPTL. Positions 454-493 are PEST; it reads PTPANHVTSLPPLKVLSGEYSHPSQPNAQSPHHDLGSGKR. A compositionally biased stretch (basic and acidic residues) spans 505 to 526; the sequence is RSHEETFGSDERPLHNGMRPDM.

The protein belongs to the velvet family. VeA subfamily. In terms of assembly, component of the heterotrimeric velvet complex composed of laeA, veA and velB; VeA acting as a bridging protein between laeA and velB.

Its subcellular location is the nucleus. It localises to the cytoplasm. Its function is as follows. Component of the velvet transcription factor complex that controls sexual/asexual developmental ratio in response to light, promoting sexual development in the darkness while stimulating asexual sporulation under illumination. The velvet complex hat acts as a global regulator for secondary metabolite gene expression. Controls the expression of hundreds of genes, including those comprising more than a dozen known secondary metabolite gene clusters. Controls the expression of the gliotoxin gene cluster. Controls the expression of the fumagillin, fumitremorgin G, fumigaclavine C and glionitrin gene clusters. The regulation of the fumagillin gene cluster and fumagillin production is performed through direct control of the expression of fumR. Negatively regulates conidiation. Required for normal protease activity. The polypeptide is Developmental and secondary metabolism regulator veA (Aspergillus fumigatus (strain ATCC MYA-4609 / CBS 101355 / FGSC A1100 / Af293) (Neosartorya fumigata)).